A 128-amino-acid chain; its full sequence is Nanos homolog 1 (128 aa).

The interval 7-23 (FNSWSDYLGLSSLISRG) is essential for its translational repressor activity. A disordered region spans residues 23–58 (GLQPREGGESPRPRWKASSPTPAEPLPSKAAEAHGH). The Nanos-type zinc finger occupies 60-114 (GCGFCRSNREAQSLYSSHRLRAPDGRVLCPVLRGYTCPLCGANGDWAHTMRYCPL). The Zn(2+) site is built by Cys61, Cys64, His77, Cys88, Cys96, Cys99, His107, and Cys112. 2 consecutive short sequence motifs (C2HC) follow at residues 61-88 (CGFC…RVLC) and 96-112 (CPLC…MRYC).

It belongs to the nanos family. Interacts with ccnb1.

Its subcellular location is the cytoplasm. It is found in the perinuclear region. Its function is as follows. Acts as a translational repressor. Can mediate repression affecting different steps in the translation process: cap-driven, IRES-driven, polyadenylated RNAs or nonpolyadenylated RNAs. Essential for the development of primordial germ cells (PGCs) by ensuring their proper migration and survival. The polypeptide is Nanos homolog 1 (nanos1) (Xenopus tropicalis (Western clawed frog)).